A 234-amino-acid chain; its full sequence is Segregation and condensation protein A (234 aa).

This sequence belongs to the ScpA family. As to quaternary structure, component of a cohesin-like complex composed of ScpA, ScpB and the Smc homodimer, in which ScpA and ScpB bind to the head domain of Smc. The presence of the three proteins is required for the association of the complex with DNA.

Its subcellular location is the cytoplasm. Its function is as follows. Participates in chromosomal partition during cell division. May act via the formation of a condensin-like complex containing Smc and ScpB that pull DNA away from mid-cell into both cell halves. The chain is Segregation and condensation protein A from Streptococcus pyogenes serotype M18 (strain MGAS8232).